A 231-amino-acid chain; its full sequence is Large ribosomal subunit protein uL1 (231 aa).

Belongs to the universal ribosomal protein uL1 family. As to quaternary structure, part of the 50S ribosomal subunit.

Its function is as follows. Binds directly to 23S rRNA. The L1 stalk is quite mobile in the ribosome, and is involved in E site tRNA release. In terms of biological role, protein L1 is also a translational repressor protein, it controls the translation of the L11 operon by binding to its mRNA. The chain is Large ribosomal subunit protein uL1 from Azoarcus sp. (strain BH72).